A 395-amino-acid chain; its full sequence is Pyridinium-3,5-bisthiocarboxylic acid mononucleotide nickel insertion protein (395 aa).

It belongs to the LarC family.

The enzyme catalyses Ni(II)-pyridinium-3,5-bisthiocarboxylate mononucleotide = pyridinium-3,5-bisthiocarboxylate mononucleotide + Ni(2+). Its function is as follows. Involved in the biosynthesis of a nickel-pincer cofactor ((SCS)Ni(II) pincer complex). Binds Ni(2+), and functions in nickel delivery to pyridinium-3,5-bisthiocarboxylic acid mononucleotide (P2TMN), to form the mature cofactor. Is thus probably required for the activation of nickel-pincer cofactor-dependent enzymes. The chain is Pyridinium-3,5-bisthiocarboxylic acid mononucleotide nickel insertion protein from Staphylococcus epidermidis (strain ATCC 35984 / DSM 28319 / BCRC 17069 / CCUG 31568 / BM 3577 / RP62A).